Here is a 723-residue protein sequence, read N- to C-terminus: Polyribonucleotide nucleotidyltransferase (723 aa).

The Mg(2+) site is built by Asp497 and Asp503. Positions 564–623 constitute a KH domain; sequence PRLLSFRIDPELIGTVIGPGGRTIKGITERTNTKIDIEDGGIVTIASHDGAAAEAAQRII. Positions 633–701 constitute an S1 motif domain; that stretch reads GEVFTGTITR…NRGRINLTLR (69 aa). The tract at residues 701–723 is disordered; the sequence is RGVPQNGEETQSEPAPTPVAPLN.

It belongs to the polyribonucleotide nucleotidyltransferase family. Mg(2+) is required as a cofactor.

The protein localises to the cytoplasm. It catalyses the reaction RNA(n+1) + phosphate = RNA(n) + a ribonucleoside 5'-diphosphate. In terms of biological role, involved in mRNA degradation. Catalyzes the phosphorolysis of single-stranded polyribonucleotides processively in the 3'- to 5'-direction. This is Polyribonucleotide nucleotidyltransferase from Prochlorococcus marinus (strain MIT 9313).